We begin with the raw amino-acid sequence, 120 residues long: C-C motif chemokine 23 (120 aa).

Residues 1 to 21 (MKVSVAALSCLMLVTALGSQA) form the signal peptide. Intrachain disulfides connect Cys-54–Cys-78, Cys-55–Cys-94, and Cys-65–Cys-105.

This sequence belongs to the intercrine beta (chemokine CC) family.

The protein resides in the secreted. Functionally, shows chemotactic activity for monocytes, resting T-lymphocytes, and neutrophils, but not for activated lymphocytes. Inhibits proliferation of myeloid progenitor cells in colony formation assays. This protein can bind heparin. Binds CCR1. The polypeptide is C-C motif chemokine 23 (CCL23) (Macaca mulatta (Rhesus macaque)).